Here is a 531-residue protein sequence, read N- to C-terminus: Phosphomethylpyrimidine synthase (531 aa).

Substrate is bound by residues N167, M196, Y225, H261, 281 to 283 (SRG), 322 to 325 (DALR), and E361. H365 serves as a coordination point for Zn(2+). Y388 is a substrate binding site. H429 lines the Zn(2+) pocket. Residues C511, C514, and C519 each contribute to the [4Fe-4S] cluster site.

This sequence belongs to the ThiC family. Requires [4Fe-4S] cluster as cofactor.

It carries out the reaction 5-amino-1-(5-phospho-beta-D-ribosyl)imidazole + S-adenosyl-L-methionine = 4-amino-2-methyl-5-(phosphooxymethyl)pyrimidine + CO + 5'-deoxyadenosine + formate + L-methionine + 3 H(+). The protein operates within cofactor biosynthesis; thiamine diphosphate biosynthesis. Functionally, catalyzes the synthesis of the hydroxymethylpyrimidine phosphate (HMP-P) moiety of thiamine from aminoimidazole ribotide (AIR) in a radical S-adenosyl-L-methionine (SAM)-dependent reaction. In Chlorobium chlorochromatii (strain CaD3), this protein is Phosphomethylpyrimidine synthase.